The chain runs to 945 residues: Isoleucine--tRNA ligase (945 aa).

A 'HIGH' region motif is present at residues 66-76 (PYANGDIHLGH). Residue E581 participates in L-isoleucyl-5'-AMP binding. The 'KMSKS' region motif lies at 622–626 (KMSKS). K625 serves as a coordination point for ATP. Zn(2+) is bound by residues C908, C911, C928, and C931.

Belongs to the class-I aminoacyl-tRNA synthetase family. IleS type 1 subfamily. In terms of assembly, monomer. Zn(2+) serves as cofactor.

It localises to the cytoplasm. It carries out the reaction tRNA(Ile) + L-isoleucine + ATP = L-isoleucyl-tRNA(Ile) + AMP + diphosphate. Its function is as follows. Catalyzes the attachment of isoleucine to tRNA(Ile). As IleRS can inadvertently accommodate and process structurally similar amino acids such as valine, to avoid such errors it has two additional distinct tRNA(Ile)-dependent editing activities. One activity is designated as 'pretransfer' editing and involves the hydrolysis of activated Val-AMP. The other activity is designated 'posttransfer' editing and involves deacylation of mischarged Val-tRNA(Ile). The polypeptide is Isoleucine--tRNA ligase (Burkholderia orbicola (strain MC0-3)).